The following is a 139-amino-acid chain: MKKNTLLNAELSYIIASLGHTDEITICDAGLPIPDRSQRIDLALIQGIPTFIDTVKATLAEMQIEGVIVAQEFKTVSPQLHDELMTLVQIEEELRGKPITISYIPHEEFKSHSHQSKAIVRTGECTPYANVIFQSGVVF.

The active-site Proton donor is the H20. Substrate is bound by residues D28, H106, and 128-130 (YAN).

This sequence belongs to the RbsD / FucU family. RbsD subfamily. As to quaternary structure, homodecamer.

The protein localises to the cytoplasm. The catalysed reaction is beta-D-ribopyranose = beta-D-ribofuranose. It participates in carbohydrate metabolism; D-ribose degradation; D-ribose 5-phosphate from beta-D-ribopyranose: step 1/2. In terms of biological role, catalyzes the interconversion of beta-pyran and beta-furan forms of D-ribose. The sequence is that of D-ribose pyranase from Aliivibrio salmonicida (strain LFI1238) (Vibrio salmonicida (strain LFI1238)).